The following is a 557-amino-acid chain: Glucose-6-phosphate isomerase (557 aa).

The residue at position 2 (A2) is an N-acetylalanine. K12 is modified (N6-acetyllysine). Phosphoserine is present on S107. K142 carries the post-translational modification N6-acetyllysine. Position 159–160 (159–160 (GS)) interacts with D-glucose 6-phosphate. S185 carries the phosphoserine; by CK2 modification. 210–215 (SKTFTT) is a binding site for D-glucose 6-phosphate. The residue at position 250 (T250) is a Phosphothreonine. D-glucose 6-phosphate-binding residues include Q354, E358, and H389. The active-site Proton donor is E358. H389 is a catalytic residue. Position 455 is a phosphoserine (S455). K519 provides a ligand contact to D-glucose 6-phosphate. K519 is a catalytic residue.

Belongs to the GPI family. Homodimer; in the catalytically active form. Monomer in the secreted form. Phosphorylation at Ser-185 by CK2 has been shown to decrease enzymatic activity and may contribute to secretion by a non-classical secretory pathway. In terms of processing, ISGylated.

The protein resides in the cytoplasm. It is found in the secreted. It carries out the reaction alpha-D-glucose 6-phosphate = beta-D-fructose 6-phosphate. The protein operates within carbohydrate degradation; glycolysis; D-glyceraldehyde 3-phosphate and glycerone phosphate from D-glucose: step 2/4. Functionally, in the cytoplasm, catalyzes the conversion of glucose-6-phosphate to fructose-6-phosphate, the second step in glycolysis, and the reverse reaction during gluconeogenesis. Besides it's role as a glycolytic enzyme, also acts as a secreted cytokine: acts as an angiogenic factor (AMF) that stimulates endothelial cell motility. Acts as a neurotrophic factor, neuroleukin, for spinal and sensory neurons. It is secreted by lectin-stimulated T-cells and induces immunoglobulin secretion. The protein is Glucose-6-phosphate isomerase of Bos taurus (Bovine).